The primary structure comprises 277 residues: NH(3)-dependent NAD(+) synthetase (277 aa).

Residue 46-53 coordinates ATP; the sequence is GISGGQDS. Asp52 is a binding site for Mg(2+). Arg142 contributes to the deamido-NAD(+) binding site. Residue Thr162 participates in ATP binding. Glu167 contacts Mg(2+). Residues Lys175 and Asp182 each coordinate deamido-NAD(+). ATP-binding residues include Lys191 and Thr213. 263–264 provides a ligand contact to deamido-NAD(+); that stretch reads HK.

The protein belongs to the NAD synthetase family. Homodimer.

It catalyses the reaction deamido-NAD(+) + NH4(+) + ATP = AMP + diphosphate + NAD(+) + H(+). The protein operates within cofactor biosynthesis; NAD(+) biosynthesis; NAD(+) from deamido-NAD(+) (ammonia route): step 1/1. Functionally, catalyzes the ATP-dependent amidation of deamido-NAD to form NAD. Uses ammonia as a nitrogen source. The protein is NH(3)-dependent NAD(+) synthetase of Corynebacterium glutamicum (strain R).